The primary structure comprises 397 residues: Tryptophan synthase beta chain (397 aa).

The residue at position 91 (Lys91) is an N6-(pyridoxal phosphate)lysine.

Belongs to the TrpB family. In terms of assembly, tetramer of two alpha and two beta chains. The cofactor is pyridoxal 5'-phosphate.

The enzyme catalyses (1S,2R)-1-C-(indol-3-yl)glycerol 3-phosphate + L-serine = D-glyceraldehyde 3-phosphate + L-tryptophan + H2O. It functions in the pathway amino-acid biosynthesis; L-tryptophan biosynthesis; L-tryptophan from chorismate: step 5/5. In terms of biological role, the beta subunit is responsible for the synthesis of L-tryptophan from indole and L-serine. This is Tryptophan synthase beta chain from Bacillus cereus (strain G9842).